The sequence spans 218 residues: Ubiquitin-conjugating enzyme E2-24 kDa (218 aa).

Residues S3–T148 form the UBC core domain. Catalysis depends on C85, which acts as the Glycyl thioester intermediate. The disordered stretch occupies residues Q154–Q218. 2 stretches are compositionally biased toward acidic residues: residues N160–D183 and D192–Q218.

The protein belongs to the ubiquitin-conjugating enzyme family.

It localises to the cytoplasm. It carries out the reaction S-ubiquitinyl-[E1 ubiquitin-activating enzyme]-L-cysteine + [E2 ubiquitin-conjugating enzyme]-L-cysteine = [E1 ubiquitin-activating enzyme]-L-cysteine + S-ubiquitinyl-[E2 ubiquitin-conjugating enzyme]-L-cysteine.. Its pathway is protein modification; protein ubiquitination. Its function is as follows. Catalyzes the covalent attachment of ubiquitin to other proteins. Required for the adaptation to the presence of glucose in the growth medium; mediates the degradation of enzymes involved in gluconeogenesis when cells are shifted to glucose-containing medium. Required for proteasome-dependent catabolite degradation of fructose-1,6-bisphosphatase (FBP1). The chain is Ubiquitin-conjugating enzyme E2-24 kDa (UBC8) from Saccharomyces cerevisiae (strain ATCC 204508 / S288c) (Baker's yeast).